Here is a 1310-residue protein sequence, read N- to C-terminus: MAIWSTRKVGLDNLRISQLLNFRGFDPSALVTKLTDPFSLQRLLTLNQSRSPPMVNRLKDSRKRRAAVVCRIRDTRDGWFSSLSSLTSSVIGLFQISVKLPHEPYKIQVMVSSQEQVQDVRQSIVELPSTFQYTCFHLEFNGKRINDFVELSEVEGLKADSEIVLVEDPYTEKEARMHVVRFRDLVGAAGDRSDNLHGLNAGLSLHDAVTAEAATDDVKEHSLSKYDIAASPSLETILPRAEAPLPKTVKSISLSAWNPPPYHLRQKGHLLYLQVTTNEGEQFQITSHVSGFYVNKCSNHKFDPLPRTTPKKVSAHSLLTLISKLSPSFNSAFEALQESNNKKDLLTTFPFQNAIPNSPWLVTPPSSNPNSHQADITRSQESYLVSGVDNAETLRDWNEEFQTTRELPRETVQDRVFRERLTSKLFADYNEAAARGAVLVARGEVAPLNPTEERDAQIFVYNNIFYSFGADGVGTFVSEGGDEAARVAVGKDVLGIKAVNQLDINGLFTPGTVVVDYLGKRIVGQSIVPGIFKQREPGEHQIDYGGVEGKDVVATHPDFVSVFEKMSKALRIKKHPVWDKEGKRHDLEGSVETKGLLGTDGRKYVLDLYRVTPLDVVWQEEPGSEDYPHRMSVLRLELVEAYWRSKMSQYVKAEVERRRAAKAQEDAANKEQPSETTESKEGESEEKAEEALDQERVDISGFQLALNPDVCSGQVPQTEEEKKQWAEDEKEVRDACEFLRSKVIPELIQDLHDGDVGFPMDGRSLSQLLHKRGINIRYLGKLAQLSKEKGSRLEALTTLLVQEMIARAFKHIANRYLRNVPAPFVASCVAHLLNCLLGADVNPKPSAEIDASLREIYPEGDFSFEKVTPETLRAEVEKQVTVRYRYTLETEWFSSLRHLQLLRDIAIKLGLQLGARDYAFTKAQLPAKVPVANGVNGASHDESKKKKKKGGDSKSPSRAVVEEKPVVSIVPDDIVNVVPLVKDASPRSSLAEEALEAGRISLMQNQKQLGQELILESLSLHEQIYGILHPEVAKLYHQLSMLYYQTDEKEAAVELARKAVIVTERTLGVDSADTILAYLNLSLFEHASGNTKTALVYIKHAMDLWKIIYGSNHPDSITTMNNAAVMLQHLKQYSDSRKWFEASLAVCESLFGKQSINTATILFQLAQALALDQDSKGAVGKMRDAYNIFLNQLGPNDRNTKEAETWLEQLTQNAVSIAKHAKDIQARRLRRINMNPRVTTLGTKVQPQVGQTAPEASGAKGAANASMDSRSIDELLKFIEGGDATSSRSKQKKRAAASNPKLRGSKKSSA.

The Clu domain occupies 375–619; the sequence is DITRSQESYL…RVTPLDVVWQ (245 aa). A compositionally biased stretch (basic and acidic residues) spans 662 to 682; the sequence is KAQEDAANKEQPSETTESKEG. 2 disordered regions span residues 662 to 692 and 931 to 960; these read KAQE…EEAL and VANG…SRAV. TPR repeat units lie at residues 1033–1066, 1075–1108, and 1117–1150; these read AKLY…TERT, ILAY…WKII, and ITTM…CESL. Disordered regions lie at residues 1245–1266 and 1281–1310; these read VQPQ…ANAS and GGDA…KSSA.

It belongs to the CLU family. In terms of assembly, may associate with the eukaryotic translation initiation factor 3 (eIF-3) complex.

It is found in the cytoplasm. Functionally, mRNA-binding protein involved in proper cytoplasmic distribution of mitochondria. This is Clustered mitochondria protein homolog from Aspergillus fumigatus (strain CBS 144.89 / FGSC A1163 / CEA10) (Neosartorya fumigata).